The primary structure comprises 852 residues: Protein SEY1 (852 aa).

The Cytoplasmic portion of the chain corresponds to 1-738; the sequence is MNGHFAAVGN…KRSAIGGITQ (738 aa). Positions 47–283 constitute a GB1/RHD3-type G domain; it reads GFNYHLISVF…FVGGVFLPEY (237 aa). GTP is bound at residue 57–64; sequence GSQSTGKS. Residues 475–500 adopt a coiled-coil conformation; that stretch reads QYRLFEKELDEVSARLRKEEMRRLAI. A helical transmembrane segment spans residues 739–759; sequence VPLYFYIVLLIFGWNEIVMVL. Over 760-762 the chain is Lumenal; it reads RNP. A helical transmembrane segment spans residues 763 to 783; the sequence is MLFMLLLVMGGGTYVAYTLNL. The Cytoplasmic portion of the chain corresponds to 784 to 852; sequence LGPMMQMANA…AQEVEEDDDI (69 aa). The interval 825–852 is disordered; sequence RSQDNGIGMDRLDSRGKKAQEVEEDDDI. Basic and acidic residues predominate over residues 834-845; sequence DRLDSRGKKAQE.

This sequence belongs to the TRAFAC class dynamin-like GTPase superfamily. GB1/RHD3 GTPase family. RHD3 subfamily.

Its subcellular location is the endoplasmic reticulum membrane. Functionally, cooperates with the reticulon proteins and tubule-shaping DP1 family proteins to generate and maintain the structure of the tubular endoplasmic reticulum network. Has GTPase activity, which is required for its function in ER organization. In Chaetomium globosum (strain ATCC 6205 / CBS 148.51 / DSM 1962 / NBRC 6347 / NRRL 1970) (Soil fungus), this protein is Protein SEY1.